The following is a 312-amino-acid chain: UDP-N-acetylenolpyruvoylglucosamine reductase (312 aa).

One can recognise an FAD-binding PCMH-type domain in the interval 30–202 (RVGGPAQWLA…VAAQFQLEPG (173 aa)). Arg181 is an active-site residue. Ser232 (proton donor) is an active-site residue. Glu302 is an active-site residue.

Belongs to the MurB family. FAD is required as a cofactor.

Its subcellular location is the cytoplasm. The enzyme catalyses UDP-N-acetyl-alpha-D-muramate + NADP(+) = UDP-N-acetyl-3-O-(1-carboxyvinyl)-alpha-D-glucosamine + NADPH + H(+). It functions in the pathway cell wall biogenesis; peptidoglycan biosynthesis. Cell wall formation. This chain is UDP-N-acetylenolpyruvoylglucosamine reductase, found in Synechococcus sp. (strain CC9311).